The sequence spans 199 residues: Fe/S biogenesis protein NfuA (199 aa).

[4Fe-4S] cluster contacts are provided by cysteine 151 and cysteine 154.

Belongs to the NfuA family. In terms of assembly, homodimer. [4Fe-4S] cluster serves as cofactor.

Functionally, involved in iron-sulfur cluster biogenesis. Binds a 4Fe-4S cluster, can transfer this cluster to apoproteins, and thereby intervenes in the maturation of Fe/S proteins. Could also act as a scaffold/chaperone for damaged Fe/S proteins. The sequence is that of Fe/S biogenesis protein NfuA from Xylella fastidiosa (strain M12).